The following is a 185-amino-acid chain: Guanosine deaminase (185 aa).

Positions 28-142 (DSDHKFLTQA…AAIAIGFDDF (115 aa)) constitute a CMP/dCMP-type deaminase domain. Zn(2+) is bound at residue H80. Residue E82 is the Proton donor of the active site. The Zn(2+) site is built by C110 and C113.

The protein belongs to the cytidine and deoxycytidylate deaminase family. In terms of tissue distribution, expressed in roots, leaves, flowers and siliques.

Its subcellular location is the cytoplasm. The protein localises to the nucleus. The catalysed reaction is guanosine + H2O + H(+) = xanthosine + NH4(+). Catalyzes the hydrolytic deamination of guanosine, producing xanthosine and ammonia. Deaminates exclusively guanosine and 2'-deoxyguanosine but no other aminated purines, pyrimidines, or pterines. Deamination of guanosine by GSDA is the only source of xanthosine production in Arabidopsis. The chain is Guanosine deaminase from Arabidopsis thaliana (Mouse-ear cress).